The following is a 1203-amino-acid chain: Kinesin-like protein KIN-14Q (1203 aa).

Positions 1–28 (MEDCCDPLLATDASPRPESFSRSEKDIA) are disordered. Residues 19–28 (SFSRSEKDIA) are compositionally biased toward basic and acidic residues. A coiled-coil region spans residues 336-395 (ENLVCRAEEEAEGMRSDCEQQRKEMEDMKRMVEELKLENQQKTRECEEALNSLSEIQNEL). Positions 499-825 (NIRVFCRCRP…LNFASRVRGI (327 aa)) constitute a Kinesin motor domain. 582–589 (GQTGTGKT) is an ATP binding site. A coiled-coil region spans residues 846–901 (VEKWKQDMKGKDEQIRKMEETMYGLEAKIKERDTKNKTLQDKVKELESQLLVERKL). The interval 907 to 931 (DTKIAEQQTKQQTEDENNTSKRPPL) is disordered.

It belongs to the TRAFAC class myosin-kinesin ATPase superfamily. Kinesin family. KIN-14 subfamily.

The protein is Kinesin-like protein KIN-14Q of Arabidopsis thaliana (Mouse-ear cress).